Reading from the N-terminus, the 227-residue chain is PKHD-type hydroxylase BamMC406_5004 (227 aa).

One can recognise a Fe2OG dioxygenase domain in the interval 80–179 (QVYPPLFNRY…RVASFFWVQS (100 aa)). Fe cation-binding residues include H98, D100, and H160. R170 contributes to the 2-oxoglutarate binding site.

Requires Fe(2+) as cofactor. L-ascorbate is required as a cofactor.

The chain is PKHD-type hydroxylase BamMC406_5004 from Burkholderia ambifaria (strain MC40-6).